Reading from the N-terminus, the 687-residue chain is T-box transcription factor TBX2b (687 aa).

A DNA-binding region (T-box) is located at residues 103 to 276 (LWDQFHKLGT…NNPFAKGFRD (174 aa)). 2 disordered regions span residues 303–452 (DRDG…ESPS) and 611–687 (NLLT…DSPK). 3 stretches are compositionally biased toward basic and acidic residues: residues 338-357 (GSRD…HQND), 375-400 (SRSE…RKTS), and 408-430 (NLEK…KDTE). Composition is skewed to polar residues over residues 431–451 (NSGI…TESP), 611–630 (NLLT…SSKC), and 644–654 (GASQRNGSPKT). A coiled-coil region spans residues 654–681 (TTMKESINELQNIQRLVSGLESQRETSS). Basic and acidic residues predominate over residues 675 to 687 (SQRETSSPRDSPK).

Binds DNA as a monomer. Expressed in the axial mesoderm, notably, in the notochordal precursor cells immediately before formation of the notochord and in the chordoneural hinge of the tail bud, after the notochord is formed. In addition, its expression is detected in the ventral forebrain, sensory neurons, fin buds and excretory system.

It is found in the nucleus. Its function is as follows. Transcription factor which acts as a transcriptional repressor. May also function as a transcriptional activator. Binds to the palindromic T site 5'-TTCACACCTAGGTGTGAA-3' DNA sequence, or a half-site, which are present in the regulatory region of several genes. Involved in the transcriptional regulation of genes required for mesoderm differentiation. Plays a role in the specification of late notochordal precursor cells and formation of the differentiated notochord. Required for cardiac atrioventricular canal formation. This chain is T-box transcription factor TBX2b (tbx2b), found in Danio rerio (Zebrafish).